The primary structure comprises 959 residues: Mitogen-activated protein kinase kinase kinase 13 (959 aa).

The tract at residues 1-47 is disordered; the sequence is MANPQEHLSCSSLPHLPLTENKTSGGRNELAAMGNHPSPKLPEDPQE. Over residues 7–18 the composition is skewed to low complexity; sequence HLSCSSLPHLPL. A Protein kinase domain is found at 167 to 408; it reads ISELQWLGSG…FRQTLMHLDI (242 aa). Residues 173–181 and K194 contribute to the ATP site; that span reads LGSGAQGAV. D278 functions as the Proton acceptor in the catalytic mechanism. 2 leucine-zipper regions span residues 432–453 and 485–506; these read VKKH…DEEL and LSAI…EQAV. Disordered stretches follow at residues 533–599, 739–828, 842–902, and 927–959; these read KRKG…GSHS, GSLD…RQRP, SSEN…LSDK, and NPVQ…SATW. Over residues 566–577 the composition is skewed to polar residues; that stretch reads SPLSGSPKMSTA. Residues 581–593 are compositionally biased toward basic residues; sequence SRYRSKPRHRRGN. 2 stretches are compositionally biased toward polar residues: residues 754–774 and 780–790; these read DLSS…SERT and SGCQSGISHQF. Residues 808-820 show a composition bias toward acidic residues; the sequence is DSSEEEGEVDSEV. The span at 866 to 876 shows a compositional bias: basic and acidic residues; it reads SANRRQDRLAE. The span at 934 to 943 shows a compositional bias: acidic residues; sequence SDCDSSEGEC. The segment covering 947–959 has biased composition (polar residues); sequence TVRTSKNYSSATW.

Belongs to the protein kinase superfamily. STE Ser/Thr protein kinase family. MAP kinase kinase kinase subfamily. In terms of assembly, homodimer; forms dimers through the leucine-zipper motif. Interacts with the C-terminus of MAPK8IP1 through the kinase catalytic domain. Binds PRDX3. Associates with the IKK complex through the kinase domain. Mg(2+) is required as a cofactor. Autophosphorylated on serine and threonine residues.

The protein resides in the cytoplasm. It localises to the membrane. It catalyses the reaction L-seryl-[protein] + ATP = O-phospho-L-seryl-[protein] + ADP + H(+). The enzyme catalyses L-threonyl-[protein] + ATP = O-phospho-L-threonyl-[protein] + ADP + H(+). Its activity is regulated as follows. Activated by autophosphorylation and homodimerization. Functionally, activates the JUN N-terminal pathway through activation of the MAP kinase kinase MAP2K7. Acts synergistically with PRDX3 to regulate the activation of NF-kappa-B in the cytosol. This activation is kinase-dependent and involves activating the IKK complex, the IKBKB-containing complex that phosphorylates inhibitors of NF-kappa-B. This Mus musculus (Mouse) protein is Mitogen-activated protein kinase kinase kinase 13 (Map3k13).